A 158-amino-acid chain; its full sequence is UPF0329 protein ECU06_0050 (158 aa).

It belongs to the UPF0329 family.

The polypeptide is UPF0329 protein ECU06_0050 (Encephalitozoon cuniculi (strain GB-M1) (Microsporidian parasite)).